Here is a 70-residue protein sequence, read N- to C-terminus: U2-agatoxin-Ao1j (70 aa).

The signal sequence occupies residues Met1–Ala20. Residues Val21–Arg34 constitute a propeptide that is removed on maturation. Cystine bridges form between Cys37–Cys53, Cys44–Cys58, and Cys52–Cys68. Position 69 is a leucine amide (Leu69).

This sequence belongs to the neurotoxin 01 (U2-agtx) family. In terms of tissue distribution, expressed by the venom gland.

The protein localises to the secreted. Functionally, insect active toxin causing rapid but reversible paralysis in crickets. No activity shown in mammals. Does not show effect on mammalian voltage-gated calcium channels. The sequence is that of U2-agatoxin-Ao1j from Agelena orientalis (Funnel-web spider).